Reading from the N-terminus, the 66-residue chain is Ornithorhynchus venom defensin-like peptide A (66 aa).

Positions 1–22 (MRLTYLLLLLVAVLFQAGSGSA) are cleaved as a signal peptide. A propeptide spanning residues 23–24 (EP) is cleaved from the precursor. Cystine bridges form between Cys33–Cys63, Cys40–Cys56, and Cys48–Cys64.

As to expression, produced by the crural gland and detected in venom from the spur located on each male hind leg. Is the only OvDLP that is expressed in venom gland alone.

It is found in the secreted. Does not show antimicrobial, myotoxic, hemolytic and cell-promoting activities. This is Ornithorhynchus venom defensin-like peptide A from Ornithorhynchus anatinus (Duckbill platypus).